We begin with the raw amino-acid sequence, 347 residues long: Mitochondrial glycine transporter (347 aa).

3 Solcar repeats span residues 18-102 (SKPT…LRTA), 138-222 (LSHT…SKRS), and 247-331 (STAS…LIMW). Helical transmembrane passes span 24 to 49 (FAAG…TRVQ), 77 to 103 (GTLP…RTAV), 144 to 169 (LITG…VRYE), 197 to 220 (GFGA…EQSK), 251 to 277 (INFI…KTRV), and 306 to 324 (GLGL…AWTV).

It belongs to the mitochondrial carrier (TC 2.A.29) family. SLC25A38 subfamily.

Its subcellular location is the mitochondrion inner membrane. It carries out the reaction glycine(in) = glycine(out). In terms of biological role, mitochondrial glycine transporter that imports glycine into the mitochondrial matrix. Plays an important role in providing glycine for the first enzymatic step in heme biosynthesis, the condensation of glycine with succinyl-CoA to produce 5-aminolevulinate (ALA) in the mitochondrial matrix. The sequence is that of Mitochondrial glycine transporter from Coccidioides immitis (strain RS) (Valley fever fungus).